Reading from the N-terminus, the 143-residue chain is Transcriptional regulator MraZ (143 aa).

SpoVT-AbrB domains are found at residues 5 to 47 (THSP…SQKE) and 76 to 119 (ASDE…DADA).

This sequence belongs to the MraZ family. Forms oligomers.

It is found in the cytoplasm. Its subcellular location is the nucleoid. This chain is Transcriptional regulator MraZ, found in Paenarthrobacter aurescens (strain TC1).